The following is an 82-amino-acid chain: Small ribosomal subunit protein bS20 (82 aa).

The span at 1–11 (MANHKSALKRI) shows a compositional bias: basic residues. Residues 1–20 (MANHKSALKRIRSNETKRLR) form a disordered region.

The protein belongs to the bacterial ribosomal protein bS20 family.

Its function is as follows. Binds directly to 16S ribosomal RNA. The protein is Small ribosomal subunit protein bS20 of Christiangramia forsetii (strain DSM 17595 / CGMCC 1.15422 / KT0803) (Gramella forsetii).